Consider the following 143-residue polypeptide: Ribosome-binding factor A (143 aa).

The disordered stretch occupies residues 1–20; the sequence is MRFMGKNKFHTGPGPSQRQL.

The protein belongs to the RbfA family. Monomer. Binds 30S ribosomal subunits, but not 50S ribosomal subunits or 70S ribosomes.

Its subcellular location is the cytoplasm. One of several proteins that assist in the late maturation steps of the functional core of the 30S ribosomal subunit. Associates with free 30S ribosomal subunits (but not with 30S subunits that are part of 70S ribosomes or polysomes). Required for efficient processing of 16S rRNA. May interact with the 5'-terminal helix region of 16S rRNA. This Roseobacter denitrificans (strain ATCC 33942 / OCh 114) (Erythrobacter sp. (strain OCh 114)) protein is Ribosome-binding factor A.